The chain runs to 319 residues: Vomeronasal type-1 receptor 96 (319 aa).

Over 1–19 (MNKVNILPSDTNIKITLFS) the chain is Extracellular. A helical transmembrane segment spans residues 20–40 (EVSVGISANSVLFFAHLCMFF). Residues 41 to 49 (EENRSKPID) are Cytoplasmic-facing. A helical membrane pass occupies residues 50–70 (LCIAFLSLTQLMLLVTMGLIA). The Extracellular segment spans residues 71-93 (ADMFMSQGIWDSTTCRSIIYFHR). Cysteine 85 and cysteine 172 are disulfide-bonded. A helical transmembrane segment spans residues 94–114 (LLRGFNLCAACLLHILWTFTL). Topologically, residues 115-134 (SPRSSCLTKFKHKSPHHISC) are cytoplasmic. Residues 135-155 (AFFSLCVLYMLFSSHLFVLII) form a helical membrane-spanning segment. Residues 156–193 (ATSNLTSDHFMYVTQSCSILPMSYSRTTMFSLVMVTRE) are Extracellular-facing. Residue asparagine 159 is glycosylated (N-linked (GlcNAc...) asparagine). Residues 194–214 (AFLISLMALFSGYMVTLLWRH) traverse the membrane as a helical segment. The Cytoplasmic segment spans residues 215–238 (KKQVQHLHSTSLSSKSSPQQRATR). Residues 239-259 (TILLLMSFFVVLYILDIVIFQ) form a helical membrane-spanning segment. At 260–269 (SRTKFKDGSM) the chain is on the extracellular side. Residues 270-290 (FYSLHIIVSHSYATISPFVFI) form a helical membrane-spanning segment. Residues 291-319 (FSDKRIIKFLGSMSGRIINICLFSDGYGP) lie on the Cytoplasmic side of the membrane.

It belongs to the G-protein coupled receptor 1 family.

Its subcellular location is the cell membrane. Functionally, putative pheromone receptor implicated in the regulation of social as well as reproductive behavior. The polypeptide is Vomeronasal type-1 receptor 96 (Vom1r96) (Rattus norvegicus (Rat)).